Here is a 556-residue protein sequence, read N- to C-terminus: Dihydroxy-acid dehydratase (556 aa).

Aspartate 81 provides a ligand contact to Mg(2+). [2Fe-2S] cluster is bound at residue cysteine 122. The Mg(2+) site is built by aspartate 123 and lysine 124. At lysine 124 the chain carries N6-carboxylysine. Cysteine 196 is a [2Fe-2S] cluster binding site. Glutamate 444 provides a ligand contact to Mg(2+). The active-site Proton acceptor is serine 470.

This sequence belongs to the IlvD/Edd family. In terms of assembly, homodimer. The cofactor is [2Fe-2S] cluster. Mg(2+) serves as cofactor.

It carries out the reaction (2R)-2,3-dihydroxy-3-methylbutanoate = 3-methyl-2-oxobutanoate + H2O. The catalysed reaction is (2R,3R)-2,3-dihydroxy-3-methylpentanoate = (S)-3-methyl-2-oxopentanoate + H2O. It participates in amino-acid biosynthesis; L-isoleucine biosynthesis; L-isoleucine from 2-oxobutanoate: step 3/4. The protein operates within amino-acid biosynthesis; L-valine biosynthesis; L-valine from pyruvate: step 3/4. Functions in the biosynthesis of branched-chain amino acids. Catalyzes the dehydration of (2R,3R)-2,3-dihydroxy-3-methylpentanoate (2,3-dihydroxy-3-methylvalerate) into 2-oxo-3-methylpentanoate (2-oxo-3-methylvalerate) and of (2R)-2,3-dihydroxy-3-methylbutanoate (2,3-dihydroxyisovalerate) into 2-oxo-3-methylbutanoate (2-oxoisovalerate), the penultimate precursor to L-isoleucine and L-valine, respectively. The sequence is that of Dihydroxy-acid dehydratase from Syntrophotalea carbinolica (strain DSM 2380 / NBRC 103641 / GraBd1) (Pelobacter carbinolicus).